The sequence spans 127 residues: EECEREKPPEGLAMDFIKRQFEIGEPEKDLCLIAQGLVCMGPATTSICGAQCPKVGIPCQGCYGPTKAVEDQGAKMISAIASDFGVEKDKTVDPEKVAEQLDDIVGTFYTYTLPASLIPMRVHKGGK.

Belongs to the [NiFe]/[NiFeSe] hydrogenase small subunit family. As to quaternary structure, the F420-non-reducing hydrogenase is composed of three subunits; MvhA, MvhD and MvhG. It forms a complex with the heterodisulfide reductase (hdr).

In terms of biological role, part of a complex that provides reducing equivalents for heterodisulfide reductase. This chain is F420-non-reducing hydrogenase subunit G (mvhG), found in Methanothermus fervidus.